We begin with the raw amino-acid sequence, 241 residues long: Platelet-derived growth factor subunit B (241 aa).

Residues 1–20 form the signal peptide; sequence MNRCWALFLSLCCYLRLVSA. The propeptide at 21-81 is removed in mature form; sequence EGDPIPEELY…ELESLSRGRR (61 aa). The N-linked (GlcNAc...) asparagine glycan is linked to Asn-63. Intrachain disulfides connect Cys-97–Cys-141, Cys-130–Cys-178, and Cys-134–Cys-180. A propeptide spans 191-241 (removed in mature form); it reads TPGSSQEQRAARTPQTRVTIRTVRVRRPPKGKHRKFKHTHDKTALKETLGA. The span at 217–230 shows a compositional bias: basic residues; sequence RPPKGKHRKFKHTH. The interval 217–241 is disordered; it reads RPPKGKHRKFKHTHDKTALKETLGA.

Belongs to the PDGF/VEGF growth factor family. In terms of assembly, antiparallel homodimer; disulfide-linked. Antiparallel heterodimer with PDGFA; disulfide-linked. The PDGFB homodimer interacts with PDGFRA and PDGFRB homodimers, and with heterodimers formed by PDGFRA and PDGFRB. The heterodimer composed of PDGFA and PDGFB interacts with PDGFRB homodimers, and with heterodimers formed by PDGFRA and PDGFRB. Interacts with XLKD1. Interacts with LRP1. Interacts with SORL1 (via the N-terminal ectodomain). Interacts with CD82; this interaction inhibits PDGFB-mediated signaling pathway.

It is found in the secreted. In terms of biological role, growth factor that plays an essential role in the regulation of embryonic development, cell proliferation, cell migration, survival and chemotaxis. Potent mitogen for cells of mesenchymal origin. Required for normal proliferation and recruitment of pericytes and vascular smooth muscle cells in the central nervous system, skin, lung, heart and placenta. Required for normal blood vessel development, and for normal development of kidney glomeruli. Plays an important role in wound healing. Signaling is modulated by the formation of heterodimers with PDGFA. The protein is Platelet-derived growth factor subunit B (PDGFB) of Ovis aries (Sheep).